A 453-amino-acid polypeptide reads, in one-letter code: Vitamin D3 receptor A (453 aa).

A DNA-binding region (nuclear receptor) is located at residues 53-128 (PRICGVCGDK…IGMMKEFILT (76 aa)). Zn(2+)-binding residues include C56, C59, C73, C76, C92, C98, C108, and C111. 2 NR C4-type zinc fingers span residues 56 to 76 (CGVCGDKATGFHFNAMTCEGC) and 92 to 111 (CPFNGNCTITKDNRRHCQAC). Residues 129-158 (DEEVQRKKDLIMKRKEEEAAREARKPRLSD) are hinge. One can recognise an NR LBD domain in the interval 159–449 (EQMQIINSLV…LTPLVLEVFG (291 aa)). Calcitriol-binding residues include Y175 and S265. Positions 274–292 (KMIPGFRDLTAEDQIALLK) are interaction with coactivator LXXLL motif. Calcitriol contacts are provided by R302, S306, H333, and H423. The short motif at 442–450 (PLVLEVFGS) is the 9aaTAD element.

Belongs to the nuclear hormone receptor family. NR1 subfamily. In terms of assembly, homodimer in the absence of bound vitamin D3. Heterodimer with RXRA after vitamin D3 binding. Interacts with ncoa1 and possibly other coactivators, leading to a strong increase of transcription of target genes. As to expression, detected in embryo 24 to 48 hours after fertilization and in gastrula.

It localises to the nucleus. Its subcellular location is the cytoplasm. Its function is as follows. Nuclear receptor for calcitriol, the active form of vitamin D3 which mediates the action of this vitamin on cells. Enters the nucleus upon vitamin D3 binding where it forms heterodimers with the retinoid X receptor/RXR. The VDR-RXR heterodimers bind to specific response elements on DNA and activate the transcription of vitamin D3-responsive target genes. Recruited to promoters via its interaction with BAZ1B/WSTF which mediates the interaction with acetylated histones, an essential step for VDR-promoter association. Plays a central role in calcium homeostasis. The protein is Vitamin D3 receptor A (vdra) of Danio rerio (Zebrafish).